Consider the following 37-residue polypeptide: Large ribosomal subunit protein bL36 (37 aa).

Belongs to the bacterial ribosomal protein bL36 family.

This is Large ribosomal subunit protein bL36 from Helicobacter pylori (strain HPAG1).